A 174-amino-acid polypeptide reads, in one-letter code: NADH-ubiquinone oxidoreductase chain 6 (174 aa).

The next 6 membrane-spanning stretches (helical) occupy residues Met-1 to Ser-21, Ser-24 to Leu-44, Gly-47 to Phe-67, Ala-86 to Val-106, Gly-111 to Gly-131, and Trp-151 to Ala-171.

It belongs to the complex I subunit 6 family. In terms of assembly, core subunit of respiratory chain NADH dehydrogenase (Complex I) which is composed of 45 different subunits.

It is found in the mitochondrion inner membrane. The catalysed reaction is a ubiquinone + NADH + 5 H(+)(in) = a ubiquinol + NAD(+) + 4 H(+)(out). Functionally, core subunit of the mitochondrial membrane respiratory chain NADH dehydrogenase (Complex I) which catalyzes electron transfer from NADH through the respiratory chain, using ubiquinone as an electron acceptor. Essential for the catalytic activity and assembly of complex I. The chain is NADH-ubiquinone oxidoreductase chain 6 (MT-ND6) from Pongo pygmaeus (Bornean orangutan).